Here is a 229-residue protein sequence, read N- to C-terminus: NAD(P)H-hydrate epimerase (229 aa).

In terms of domain architecture, YjeF N-terminal spans 10 to 217 (AINVDLELFN…ALQRKYELNL (208 aa)). Position 60–64 (60–64 (NNGGD)) interacts with (6S)-NADPHX. N61 and D125 together coordinate K(+). Residues 129-135 (GFSFKPP) and D158 each bind (6S)-NADPHX. Residue S161 participates in K(+) binding.

It belongs to the NnrE/AIBP family. It depends on K(+) as a cofactor.

It carries out the reaction (6R)-NADHX = (6S)-NADHX. The enzyme catalyses (6R)-NADPHX = (6S)-NADPHX. In terms of biological role, catalyzes the epimerization of the S- and R-forms of NAD(P)HX, a damaged form of NAD(P)H that is a result of enzymatic or heat-dependent hydration. This is a prerequisite for the S-specific NAD(P)H-hydrate dehydratase to allow the repair of both epimers of NAD(P)HX. In Drosophila mojavensis (Fruit fly), this protein is NAD(P)H-hydrate epimerase.